A 414-amino-acid polypeptide reads, in one-letter code: Dual-specificity RNA methyltransferase RlmN (414 aa).

Residues 1 to 20 (MMSTPETATEATAPEAAPAP) are compositionally biased toward low complexity. Residues 1 to 24 (MMSTPETATEATAPEAAPAPSLGA) are disordered. The active-site Proton acceptor is the Glu-129. The Radical SAM core domain maps to 135-385 (ESDRGTLCVS…VRTPRGRDIL (251 aa)). An intrachain disulfide couples Cys-142 to Cys-388. Residues Cys-149, Cys-153, and Cys-156 each contribute to the [4Fe-4S] cluster site. S-adenosyl-L-methionine contacts are provided by residues 214-215 (GE), Ser-246, 268-270 (SLH), and Asn-345. Cys-388 serves as the catalytic S-methylcysteine intermediate.

The protein belongs to the radical SAM superfamily. RlmN family. It depends on [4Fe-4S] cluster as a cofactor.

It localises to the cytoplasm. The enzyme catalyses adenosine(2503) in 23S rRNA + 2 reduced [2Fe-2S]-[ferredoxin] + 2 S-adenosyl-L-methionine = 2-methyladenosine(2503) in 23S rRNA + 5'-deoxyadenosine + L-methionine + 2 oxidized [2Fe-2S]-[ferredoxin] + S-adenosyl-L-homocysteine. The catalysed reaction is adenosine(37) in tRNA + 2 reduced [2Fe-2S]-[ferredoxin] + 2 S-adenosyl-L-methionine = 2-methyladenosine(37) in tRNA + 5'-deoxyadenosine + L-methionine + 2 oxidized [2Fe-2S]-[ferredoxin] + S-adenosyl-L-homocysteine. Its function is as follows. Specifically methylates position 2 of adenine 2503 in 23S rRNA and position 2 of adenine 37 in tRNAs. m2A2503 modification seems to play a crucial role in the proofreading step occurring at the peptidyl transferase center and thus would serve to optimize ribosomal fidelity. The polypeptide is Dual-specificity RNA methyltransferase RlmN (Xanthobacter autotrophicus (strain ATCC BAA-1158 / Py2)).